The primary structure comprises 672 residues: tRNA 5-methylaminomethyl-2-thiouridine biosynthesis bifunctional protein MnmC (672 aa).

The tract at residues methionine 1–glutamate 243 is tRNA (mnm(5)s(2)U34)-methyltransferase. An FAD-dependent cmnm(5)s(2)U34 oxidoreductase region spans residues isoleucine 269 to leucine 672.

In the N-terminal section; belongs to the methyltransferase superfamily. tRNA (mnm(5)s(2)U34)-methyltransferase family. This sequence in the C-terminal section; belongs to the DAO family. FAD serves as cofactor.

The protein resides in the cytoplasm. It carries out the reaction 5-aminomethyl-2-thiouridine(34) in tRNA + S-adenosyl-L-methionine = 5-methylaminomethyl-2-thiouridine(34) in tRNA + S-adenosyl-L-homocysteine + H(+). In terms of biological role, catalyzes the last two steps in the biosynthesis of 5-methylaminomethyl-2-thiouridine (mnm(5)s(2)U) at the wobble position (U34) in tRNA. Catalyzes the FAD-dependent demodification of cmnm(5)s(2)U34 to nm(5)s(2)U34, followed by the transfer of a methyl group from S-adenosyl-L-methionine to nm(5)s(2)U34, to form mnm(5)s(2)U34. In Vibrio vulnificus (strain YJ016), this protein is tRNA 5-methylaminomethyl-2-thiouridine biosynthesis bifunctional protein MnmC.